We begin with the raw amino-acid sequence, 445 residues long: Histamine H3 receptor (445 aa).

Residues 1–39 are Extracellular-facing; the sequence is MERAPPDGLMNASGALAGEAAAAGGARGFSAAWTAVLAA. A glycan (N-linked (GlcNAc...) asparagine) is linked at Asn-11. A helical transmembrane segment spans residues 40–60; that stretch reads LMALLIVATVLGNALVMLAFV. Residues 61–70 lie on the Cytoplasmic side of the membrane; the sequence is ADSSLRTQNN. A helical membrane pass occupies residues 71 to 91; that stretch reads FFLLNLAISDFLVGAFCIPLY. The Extracellular portion of the chain corresponds to 92–108; the sequence is VPYVLTGRWTFGRGLCK. A disulfide bond links Cys-107 and Cys-188. Residues 109-129 form a helical membrane-spanning segment; that stretch reads LWLVVDYLLCASSVFNIVLIS. The Cytoplasmic portion of the chain corresponds to 130–156; that stretch reads YDRFLSVTRAVSYRAQQGDTRRAVRKM. Residues 157–177 form a helical membrane-spanning segment; the sequence is ALVWVLAFLLYGPAILSWEYL. The Extracellular portion of the chain corresponds to 178 to 196; the sequence is SGGSSIPEGHCYAEFFYNW. The chain crosses the membrane as a helical span at residues 197 to 217; sequence YFLITASTLEFFTPFLSVTFF. At 218-359 the chain is on the cytoplasmic side; sequence NLSIYLNIQR…LSRDKKVAKS (142 aa). Disordered stretches follow at residues 234-259 and 273-336; these read DGGR…PSCW and HRYG…LEKR. Positions 241–256 are enriched in pro residues; the sequence is PEPPPDAQPSPPPAPP. Gly residues predominate over residues 289–299; sequence AGLGGGSGGGA. Positions 300 to 312 are enriched in low complexity; that stretch reads AASPTSSSGSSSR. A helical transmembrane segment spans residues 360-380; the sequence is LAIIVSIFGLCWAPYTLLMII. Residues 381-396 are Extracellular-facing; it reads RAACHGHCVPDYWYET. The chain crosses the membrane as a helical span at residues 397-417; sequence SFWLLWANSAVNPVLYPLCHY. Over 418 to 445 the chain is Cytoplasmic; the sequence is SFRRAFTKLLCPQKLKVQPHGSLEQCWK. Ser-439 carries the phosphoserine modification.

The protein belongs to the G-protein coupled receptor 1 family.

It is found in the cell membrane. Functionally, the H3 subclass of histamine receptors could mediate the histamine signals in CNS and peripheral nervous system. Signals through the inhibition of adenylate cyclase and displays high constitutive activity (spontaneous activity in the absence of agonist). The sequence is that of Histamine H3 receptor (Hrh3) from Mus musculus (Mouse).